The chain runs to 225 residues: UPF0758 protein BCB4264_A4572 (225 aa).

In terms of domain architecture, MPN spans 103–225; the sequence is SIRSPEDCAK…FVSLKEKGHI (123 aa). Residues His174, His176, and Asp187 each coordinate Zn(2+). The JAMM motif motif lies at 174–187; sequence HNHPSGDPTPSRED.

This sequence belongs to the UPF0758 family.

This is UPF0758 protein BCB4264_A4572 from Bacillus cereus (strain B4264).